The sequence spans 269 residues: Lipid II flippase Amj (269 aa).

7 helical membrane-spanning segments follow: residues 1–21, 31–51, 84–104, 105–125, 161–181, 192–212, and 245–265; these read MHVI…IHSI, SGAR…MVIV, FLIF…PSFV, ALFS…FQVF, LFVI…SALY, TAVM…AIFV, and VAGT…IAWL.

Belongs to the Amj family.

The protein localises to the cell membrane. It functions in the pathway cell wall biogenesis; peptidoglycan biosynthesis. Its function is as follows. Involved in peptidoglycan biosynthesis. Transports lipid-linked peptidoglycan precursors from the inner to the outer leaflet of the cytoplasmic membrane. May serve as a defense mechanism against naturally occurring MurJ antagonists. The chain is Lipid II flippase Amj from Bacillus subtilis (strain 168).